We begin with the raw amino-acid sequence, 192 residues long: Fe/S biogenesis protein NfuA (192 aa).

Residues Cys-149 and Cys-152 each contribute to the [4Fe-4S] cluster site.

The protein belongs to the NfuA family. As to quaternary structure, homodimer. [4Fe-4S] cluster is required as a cofactor.

Involved in iron-sulfur cluster biogenesis. Binds a 4Fe-4S cluster, can transfer this cluster to apoproteins, and thereby intervenes in the maturation of Fe/S proteins. Could also act as a scaffold/chaperone for damaged Fe/S proteins. The chain is Fe/S biogenesis protein NfuA from Colwellia psychrerythraea (strain 34H / ATCC BAA-681) (Vibrio psychroerythus).